The chain runs to 551 residues: Structure-specific endonuclease subunit MUS81 (551 aa).

2 disordered regions span residues 84 to 131 (HLAS…VGYW) and 229 to 259 (FRPEEHHGEDSAVPEALSEPGTTEGAVQQRP). Low complexity predominate over residues 92–107 (APSSPSGKKGASKGPP). At S95 the chain carries Phosphoserine. Over residues 110–131 (VQDSSMPVPTQPQAGSTSVGYW) the composition is skewed to polar residues. The interaction with BLM stretch occupies residues 124-244 (GSTSVGYWPA…HGEDSAVPEA (121 aa)). The winged helix domain (WHD); critical for endonuclease activity stretch occupies residues 131–230 (WPAQNSGARE…GLSTRHAGFR (100 aa)). A compositionally biased stretch (basic and acidic residues) spans 229 to 238 (FRPEEHHGED). The region spanning 270–372 (LLCVDIGETR…HRVYLVEEHG (103 aa)) is the ERCC4 domain. Catalysis depends on residues D274, E277, and D307. Mg(2+) contacts are provided by D274, E277, D307, E333, and R334. Residues 471–545 (VREVFARQLM…LSRTLYQLYC (75 aa)) form a helix-hairpin-helix (2HhH); involved in DNA recognition and bending region.

This sequence belongs to the XPF family. Part of the heterodimeric DNA structure-specific endonuclease complex MUS81-EME1. Part of the heterodimeric DNA structure-specific endonuclease complex MUS81-EME2. Interacts with BLM; may stimulate the endonuclease activity of MUS81. Interacts with SLX4/BTBD12; this interaction is direct and links the MUS81-EME1 complex to SLX4, which may coordinate the action of the structure-specific endonuclease during DNA repair. Interacts with DCLRE1B/Apollo. Interacts with RECQL5; this interaction stimulates mitotic DNA synthesis. Interacts with CHEK2. The cofactor is Mg(2+). In terms of tissue distribution, expressed highly in testis. Expressed also in bone marrow, brain, thymus and to a lesser extent in heart and skeletal muscle, colon, kidney and spleen.

The protein resides in the nucleus. The protein localises to the nucleolus. Functionally, catalytic subunit of two functionally distinct, structure-specific, heterodimeric DNA endonucleases MUS81-EME1 and MUS81-EME2 that are involved in the maintenance of genome stability. Both endonucleases have essentially the same substrate specificity though MUS81-EME2 is more active than its MUS81-EME1 counterpart. Both cleave 3'-flaps and nicked Holliday junctions, and exhibit limited endonuclease activity with 5' flaps and nicked double-stranded DNAs. MUS81-EME2 which is active during the replication of DNA is more specifically involved in replication fork processing. Replication forks frequently encounter obstacles to their passage, including DNA base lesions, DNA interstrand cross-links, difficult-to-replicate sequences, transcription bubbles, or tightly bound proteins. One mechanism for the restart of a stalled replication fork involves nucleolytic cleavage mediated by the MUS81-EME2 endonuclease. By acting upon the stalled fork, MUS81-EME2 generates a DNA double-strand break (DSB) that can be repaired by homologous recombination, leading to the restoration of an active fork. MUS81-EME2 could also function in telomere maintenance. MUS81-EME1, on the other hand, is active later in the cell cycle and functions in the resolution of mitotic recombination intermediates including the Holliday junctions, the four-way DNA intermediates that form during homologous recombination. This Mus musculus (Mouse) protein is Structure-specific endonuclease subunit MUS81.